The chain runs to 246 residues: tRNA (guanine-N(1)-)-methyltransferase (246 aa).

S-adenosyl-L-methionine is bound by residues Gly-113 and 132–137; that span reads LGDYVL.

The protein belongs to the RNA methyltransferase TrmD family. Homodimer.

It is found in the cytoplasm. The enzyme catalyses guanosine(37) in tRNA + S-adenosyl-L-methionine = N(1)-methylguanosine(37) in tRNA + S-adenosyl-L-homocysteine + H(+). Specifically methylates guanosine-37 in various tRNAs. The polypeptide is tRNA (guanine-N(1)-)-methyltransferase (Lactiplantibacillus plantarum (strain ATCC BAA-793 / NCIMB 8826 / WCFS1) (Lactobacillus plantarum)).